The primary structure comprises 235 residues: Hydroxyacylglutathione hydrolase (235 aa).

Residues histidine 53, histidine 55, aspartate 57, histidine 58, histidine 109, aspartate 127, and histidine 165 each coordinate Zn(2+).

Belongs to the metallo-beta-lactamase superfamily. Glyoxalase II family. Monomer. Requires Zn(2+) as cofactor.

The catalysed reaction is an S-(2-hydroxyacyl)glutathione + H2O = a 2-hydroxy carboxylate + glutathione + H(+). Its pathway is secondary metabolite metabolism; methylglyoxal degradation; (R)-lactate from methylglyoxal: step 2/2. Thiolesterase that catalyzes the hydrolysis of S-D-lactoyl-glutathione to form glutathione and D-lactic acid. In Haemophilus ducreyi (strain 35000HP / ATCC 700724), this protein is Hydroxyacylglutathione hydrolase.